Reading from the N-terminus, the 92-residue chain is UPF0235 protein CCA_00247 (92 aa).

Belongs to the UPF0235 family.

The protein is UPF0235 protein CCA_00247 of Chlamydia caviae (strain ATCC VR-813 / DSM 19441 / 03DC25 / GPIC) (Chlamydophila caviae).